A 174-amino-acid polypeptide reads, in one-letter code: MKVAVGTVNPVKVNAVKNVFGKLFDNVEVEGRKVGSGVPDQPFGSETIKGAINRAKNAYRTGDYDYGVGIEAGLTDVEGYVLDIQFCAVFDGLDCTTGCGSGFQYPPTVLAEVLTGREVGDVMSELTGIENLGQKMGAIGYLSRGMLDRTQLTEQSVLMAMIPRLNPKLYRQID.

Aspartate 63 is a binding site for Mg(2+).

Belongs to the YjjX NTPase family. As to quaternary structure, homodimer. The cofactor is Mg(2+). Requires Mn(2+) as cofactor.

The catalysed reaction is XTP + H2O = XDP + phosphate + H(+). It catalyses the reaction ITP + H2O = IDP + phosphate + H(+). Functionally, phosphatase that hydrolyzes non-canonical purine nucleotides such as XTP and ITP to their respective diphosphate derivatives. Probably excludes non-canonical purines from DNA/RNA precursor pool, thus preventing their incorporation into DNA/RNA and avoiding chromosomal lesions. The chain is Probable inosine/xanthosine triphosphatase from Methanocella arvoryzae (strain DSM 22066 / NBRC 105507 / MRE50).